The primary structure comprises 365 residues: Aminomethyltransferase (365 aa).

This sequence belongs to the GcvT family. The glycine cleavage system is composed of four proteins: P, T, L and H.

It catalyses the reaction N(6)-[(R)-S(8)-aminomethyldihydrolipoyl]-L-lysyl-[protein] + (6S)-5,6,7,8-tetrahydrofolate = N(6)-[(R)-dihydrolipoyl]-L-lysyl-[protein] + (6R)-5,10-methylene-5,6,7,8-tetrahydrofolate + NH4(+). The glycine cleavage system catalyzes the degradation of glycine. In Halalkalibacterium halodurans (strain ATCC BAA-125 / DSM 18197 / FERM 7344 / JCM 9153 / C-125) (Bacillus halodurans), this protein is Aminomethyltransferase.